We begin with the raw amino-acid sequence, 182 residues long: MASELDGLPVIATRREEAEGFLQGLVSKSLGWARKYSLFTYPFVTACCGMEYMTMASARYDSDRFGAAMPRFSPRQADLLMVVGTVNCKQAPILQRVYEQMADPKWVMAFGVCASSGGFYDNYATVQGIDRVIPVDVYVPGCPPRPEQVLDGIMLLQKKIQNQSHKLIDRTPLPVISGGAGR.

[4Fe-4S] cluster is bound by residues Cys47, Cys48, Cys113, and Cys142.

Belongs to the complex I 20 kDa subunit family. As to quaternary structure, NDH-1 is composed of 14 different subunits. Subunits NuoB, C, D, E, F, and G constitute the peripheral sector of the complex. It depends on [4Fe-4S] cluster as a cofactor.

It localises to the cell inner membrane. It carries out the reaction a quinone + NADH + 5 H(+)(in) = a quinol + NAD(+) + 4 H(+)(out). In terms of biological role, NDH-1 shuttles electrons from NADH, via FMN and iron-sulfur (Fe-S) centers, to quinones in the respiratory chain. The immediate electron acceptor for the enzyme in this species is believed to be ubiquinone. Couples the redox reaction to proton translocation (for every two electrons transferred, four hydrogen ions are translocated across the cytoplasmic membrane), and thus conserves the redox energy in a proton gradient. This Anaeromyxobacter dehalogenans (strain 2CP-1 / ATCC BAA-258) protein is NADH-quinone oxidoreductase subunit B.